Consider the following 265-residue polypeptide: Metallo-beta-lactamase VIM-7 (265 aa).

A signal peptide spans methionine 1–alanine 17. Residues histidine 113, histidine 115, aspartate 117, histidine 178, cysteine 197, and histidine 239 each coordinate Zn(2+).

It belongs to the metallo-beta-lactamase superfamily. Class-B beta-lactamase family. As to quaternary structure, monomer. Requires Zn(2+) as cofactor.

It localises to the periplasm. It catalyses the reaction a beta-lactam + H2O = a substituted beta-amino acid. Class B beta-lactamase which confers resistance to the beta-lactam antibiotics, including penicillins, cephalosporins and carbapenems. Acts via hydrolysis of the beta-lactam ring. Has penicillin-, cephalosporin- and carbapenem-hydrolyzing activities. The chain is Metallo-beta-lactamase VIM-7 from Pseudomonas aeruginosa.